Consider the following 231-residue polypeptide: MATIRRLKQLRTYEVALSRHGLGPVAGVDEAGRGACCGPISIAACILPDRPIADLAVLTDSKQLSPPVRARLMPLVKKHAVAWSVIHISAADIDRFGIQHANISGMRRAVAALEVRPGYVLTDAFRIPGLPCPSLPIPGGDASARCIAAASVLAKQTRDEIMTDMAQQFPQYGLAGHKGYSTKVHMDAVRRHGASPQHRYSYANVAKAHREWALSHSDTEVQNTGKVEHER.

The region spanning 23-214 (GPVAGVDEAG…VAKAHREWAL (192 aa)) is the RNase H type-2 domain. A divalent metal cation is bound by residues Asp-29, Glu-30, and Asp-123.

The protein belongs to the RNase HII family. Requires Mn(2+) as cofactor. Mg(2+) serves as cofactor.

It is found in the cytoplasm. It carries out the reaction Endonucleolytic cleavage to 5'-phosphomonoester.. In terms of biological role, endonuclease that specifically degrades the RNA of RNA-DNA hybrids. This Corynebacterium efficiens (strain DSM 44549 / YS-314 / AJ 12310 / JCM 11189 / NBRC 100395) protein is Ribonuclease HII.